An 86-amino-acid chain; its full sequence is Translation initiation factor IF-1 3 (86 aa).

The S1-like domain occupies 1 to 72 (MAKEELIEMQ…NKGRVTFRHI (72 aa)).

This sequence belongs to the IF-1 family. Component of the 30S ribosomal translation pre-initiation complex which assembles on the 30S ribosome in the order IF-2 and IF-3, IF-1 and N-formylmethionyl-tRNA(fMet); mRNA recruitment can occur at any time during PIC assembly.

Its subcellular location is the cytoplasm. One of the essential components for the initiation of protein synthesis. Stabilizes the binding of IF-2 and IF-3 on the 30S subunit to which N-formylmethionyl-tRNA(fMet) subsequently binds. Helps modulate mRNA selection, yielding the 30S pre-initiation complex (PIC). Upon addition of the 50S ribosomal subunit IF-1, IF-2 and IF-3 are released leaving the mature 70S translation initiation complex. The sequence is that of Translation initiation factor IF-1 3 from Acidovorax sp. (strain JS42).